Consider the following 332-residue polypeptide: Ephrin-B2a (332 aa).

Residues 1–24 (MGDSLWRYYFGVLVIACKVNLSRA) form the signal peptide. Residues Asn-20 and Asn-33 are each glycosylated (N-linked (GlcNAc...) asparagine). The region spanning 25-161 (LILDSIYWNT…TKSMKIIMKV (137 aa)) is the Ephrin RBD domain. Residues 25 to 225 (LILDSIYWNT…VIGSEVALFA (201 aa)) lie on the Extracellular side of the membrane. Intrachain disulfides connect Cys-59-Cys-98 and Cys-86-Cys-150. A glycan (N-linked (GlcNAc...) asparagine) is linked at Asn-136. Residues 162–212 (GQNPSDPISPKDYPTSYPPKHPDLGGKDSKSNEVLKPDASPHGEDKGDGNK) form a disordered region. Residues 181-210 (KHPDLGGKDSKSNEVLKPDASPHGEDKGDG) are compositionally biased toward basic and acidic residues. Asn-211 is a glycosylation site (N-linked (GlcNAc...) asparagine). A helical membrane pass occupies residues 226–246 (CIASASVIVIIIIIMLVFLLL). Over 247-332 (KYRRRHRKHS…QSPANIYYKV (86 aa)) the chain is Cytoplasmic. Residues 255–285 (HSPQHATTLSLSTLATPKRGGSGGNNNGSEP) are disordered. The span at 260 to 270 (ATTLSLSTLAT) shows a compositional bias: low complexity. A PDZ-binding motif is present at residues 330–332 (YKV).

It belongs to the ephrin family. As to quaternary structure, binds to the receptor tyrosine kinase ephb4. Inducible phosphorylation of tyrosine residues in the cytoplasmic domain.

Its subcellular location is the cell membrane. Functionally, cell surface transmembrane ligand for Eph receptors, a family of receptor tyrosine kinases which are crucial for migration, repulsion and adhesion during neuronal, vascular and epithelial development. Binds promiscuously Eph receptors residing on adjacent cells, leading to contact-dependent bidirectional signaling into neighboring cells. The signaling pathway downstream of the receptor is referred to as forward signaling while the signaling pathway downstream of the ephrin ligand is referred to as reverse signaling. Together with ephb4 may play a central role in heart morphogenesis and angiogenesis through regulation of cell adhesion and cell migration. In Danio rerio (Zebrafish), this protein is Ephrin-B2a (efnb2a).